A 94-amino-acid polypeptide reads, in one-letter code: Small ribosomal subunit protein uS17 (94 aa).

It belongs to the universal ribosomal protein uS17 family. In terms of assembly, part of the 30S ribosomal subunit.

Its function is as follows. One of the primary rRNA binding proteins, it binds specifically to the 5'-end of 16S ribosomal RNA. The chain is Small ribosomal subunit protein uS17 from Streptomyces avermitilis (strain ATCC 31267 / DSM 46492 / JCM 5070 / NBRC 14893 / NCIMB 12804 / NRRL 8165 / MA-4680).